The primary structure comprises 337 residues: Interferon gamma receptor 2 (337 aa).

Positions 1–21 (MRPTLLWSLLLLLGVFAAAAA) are cleaved as a signal peptide. Residues 28–247 (SQLPAPQHPK…MADASTELQQ (220 aa)) lie on the Extracellular side of the membrane. A Fibronectin type-III 1 domain is found at 31 to 129 (PAPQHPKIRL…GALHSAWVTM (99 aa)). Residues asparagine 56 and asparagine 85 are each glycosylated (N-linked (GlcNAc...) asparagine). A disulfide bridge links cysteine 86 with cysteine 94. Residues asparagine 110, asparagine 137, asparagine 219, and asparagine 231 are each glycosylated (N-linked (GlcNAc...) asparagine). In terms of domain architecture, Fibronectin type-III 2 spans 142–240 (PPENIEVTPG…NISCYETMAD (99 aa)). A disulfide bridge connects residues cysteine 209 and cysteine 234. Residues 248-268 (VILISVGTFSLLSVLAGACFF) form a helical membrane-spanning segment. Over 269-337 (LVLKYRGLIK…KEQEDVLQTL (69 aa)) the chain is Cytoplasmic. Residues 276–277 (LI) carry the Dileucine internalization motif motif.

Belongs to the type II cytokine receptor family. As to quaternary structure, heterodimer with IFNGR1, to form the IFNG receptor complex. Interacts (via intracellular domain) with JAK2. Expressed in T-cells (at protein level).

Its subcellular location is the cell membrane. The protein localises to the cytoplasmic vesicle membrane. The protein resides in the golgi apparatus membrane. It localises to the endoplasmic reticulum membrane. It is found in the cytoplasm. Functionally, associates with IFNGR1 to form a receptor for the cytokine interferon gamma (IFNG). Ligand binding stimulates activation of the JAK/STAT signaling pathway. Required for signal transduction in contrast to other receptor subunit responsible for ligand binding. The chain is Interferon gamma receptor 2 from Homo sapiens (Human).